A 434-amino-acid chain; its full sequence is Probable phosphoglucosamine mutase (434 aa).

The active-site Phosphoserine intermediate is S91. 4 residues coordinate Mg(2+): S91, D229, D231, and D233. S91 is modified (phosphoserine).

This sequence belongs to the phosphohexose mutase family. Mg(2+) is required as a cofactor. In terms of processing, activated by phosphorylation.

It carries out the reaction alpha-D-glucosamine 1-phosphate = D-glucosamine 6-phosphate. Its function is as follows. Catalyzes the conversion of glucosamine-6-phosphate to glucosamine-1-phosphate. The sequence is that of Probable phosphoglucosamine mutase from Methanosarcina acetivorans (strain ATCC 35395 / DSM 2834 / JCM 12185 / C2A).